Consider the following 503-residue polypeptide: Glutamate--tRNA ligase (503 aa).

The short motif at Pro-9 to Thr-19 is the 'HIGH' region element. A 'KMSKS' region motif is present at residues Lys-251–Arg-255. Lys-254 lines the ATP pocket.

Belongs to the class-I aminoacyl-tRNA synthetase family. Glutamate--tRNA ligase type 1 subfamily. In terms of assembly, monomer.

The protein resides in the cytoplasm. The catalysed reaction is tRNA(Glu) + L-glutamate + ATP = L-glutamyl-tRNA(Glu) + AMP + diphosphate. In terms of biological role, catalyzes the attachment of glutamate to tRNA(Glu) in a two-step reaction: glutamate is first activated by ATP to form Glu-AMP and then transferred to the acceptor end of tRNA(Glu). This is Glutamate--tRNA ligase from Saccharophagus degradans (strain 2-40 / ATCC 43961 / DSM 17024).